A 278-amino-acid chain; its full sequence is MRSLWKGSISFGLVNIPVALYPATRSEELKFRLLRSSDLSPVNYKRVAQADGREVPWEQIVKGYEYEKGKFVVLKEDDFKRVDVEATQTVDIMDFVQLDEVNPMYFHKPYYLVPDKGGAPAYTLLHDVLTETKKAGIAKVVIRTRQHLAAVKAQGQALVLEIMHFAQELVDVGELDIPVAKGGAKRRELDMAKALVEQMTETWQPERYTDDYTSALMAMIKEKIESGGKTSGAAPKPRRATNVIDLAAVLQESLNQTGAGAKKKPAKTAKRGKSRKAA.

The 164-residue stretch at 9–172 folds into the Ku domain; sequence ISFGLVNIPV…MHFAQELVDV (164 aa). The disordered stretch occupies residues 255–278; that stretch reads NQTGAGAKKKPAKTAKRGKSRKAA. Positions 261-278 are enriched in basic residues; it reads AKKKPAKTAKRGKSRKAA.

It belongs to the prokaryotic Ku family. As to quaternary structure, homodimer. Interacts with LigD.

Its function is as follows. With LigD forms a non-homologous end joining (NHEJ) DNA repair enzyme, which repairs dsDNA breaks with reduced fidelity. Binds linear dsDNA with 5'- and 3'- overhangs but not closed circular dsDNA nor ssDNA. Recruits and stimulates the ligase activity of LigD. This chain is Non-homologous end joining protein Ku, found in Opitutus terrae (strain DSM 11246 / JCM 15787 / PB90-1).